The following is a 572-amino-acid chain: Urease subunit alpha (572 aa).

The region spanning 132–572 (GGFDSHIHFI…LPMAQRYFMY (441 aa)) is the Urease domain. H137, H139, and K220 together coordinate Ni(2+). K220 bears the N6-carboxylysine mark. H222 is a substrate binding site. Ni(2+)-binding residues include H249 and H275. Residue H323 is the Proton donor of the active site. Ni(2+) is bound at residue D363.

The protein belongs to the metallo-dependent hydrolases superfamily. Urease alpha subunit family. As to quaternary structure, heterotrimer of UreA (gamma), UreB (beta) and UreC (alpha) subunits. Three heterotrimers associate to form the active enzyme. Requires Ni cation as cofactor. Post-translationally, carboxylation allows a single lysine to coordinate two nickel ions.

The protein localises to the cytoplasm. The catalysed reaction is urea + 2 H2O + H(+) = hydrogencarbonate + 2 NH4(+). Its pathway is nitrogen metabolism; urea degradation; CO(2) and NH(3) from urea (urease route): step 1/1. The chain is Urease subunit alpha from Bradyrhizobium diazoefficiens (strain JCM 10833 / BCRC 13528 / IAM 13628 / NBRC 14792 / USDA 110).